We begin with the raw amino-acid sequence, 442 residues long: Probable protein phosphatase 2C 15 (442 aa).

In terms of domain architecture, PPM-type phosphatase spans 35–303; sequence AAERPELQVG…DDTTCIVVDI (269 aa). Residues Asp-80, Gly-81, Asp-255, and Asp-294 each contribute to the Mn(2+) site. Positions 420 to 434 are enriched in basic and acidic residues; the sequence is KKEAMEGKRRSRDSS. Residues 420–442 are disordered; sequence KKEAMEGKRRSRDSSSRNSGSSE.

Belongs to the PP2C family. It depends on Mg(2+) as a cofactor. Mn(2+) serves as cofactor.

It carries out the reaction O-phospho-L-seryl-[protein] + H2O = L-seryl-[protein] + phosphate. The enzyme catalyses O-phospho-L-threonyl-[protein] + H2O = L-threonyl-[protein] + phosphate. The chain is Probable protein phosphatase 2C 15 from Oryza sativa subsp. japonica (Rice).